A 502-amino-acid polypeptide reads, in one-letter code: Maturase K (502 aa).

The protein belongs to the intron maturase 2 family. MatK subfamily.

Its subcellular location is the plastid. It is found in the chloroplast. Functionally, usually encoded in the trnK tRNA gene intron. Probably assists in splicing its own and other chloroplast group II introns. The protein is Maturase K of Ipomoea purpurea (Common morning glory).